The chain runs to 146 residues: ATP synthase epsilon chain (146 aa).

Residues 103–124 (QAERELGQLPEEEDEDSRRARE) form a disordered region.

Belongs to the ATPase epsilon chain family. As to quaternary structure, F-type ATPases have 2 components, CF(1) - the catalytic core - and CF(0) - the membrane proton channel. CF(1) has five subunits: alpha(3), beta(3), gamma(1), delta(1), epsilon(1). CF(0) has three main subunits: a, b and c.

The protein resides in the cell membrane. Functionally, produces ATP from ADP in the presence of a proton gradient across the membrane. The chain is ATP synthase epsilon chain from Rubrobacter xylanophilus (strain DSM 9941 / JCM 11954 / NBRC 16129 / PRD-1).